Here is a 456-residue protein sequence, read N- to C-terminus: UDP-N-acetylmuramate--L-alanine ligase (456 aa).

112 to 118 (GAHGKTS) is an ATP binding site.

This sequence belongs to the MurCDEF family.

The protein localises to the cytoplasm. The enzyme catalyses UDP-N-acetyl-alpha-D-muramate + L-alanine + ATP = UDP-N-acetyl-alpha-D-muramoyl-L-alanine + ADP + phosphate + H(+). It functions in the pathway cell wall biogenesis; peptidoglycan biosynthesis. Functionally, cell wall formation. This chain is UDP-N-acetylmuramate--L-alanine ligase, found in Desulforapulum autotrophicum (strain ATCC 43914 / DSM 3382 / VKM B-1955 / HRM2) (Desulfobacterium autotrophicum).